The primary structure comprises 261 residues: Ribonuclease HII (261 aa).

The RNase H type-2 domain occupies 71–259 (QYIAGVDEVG…VKEAKLHFES (189 aa)). 3 residues coordinate a divalent metal cation: Asp77, Glu78, and Asp169.

It belongs to the RNase HII family. It depends on Mn(2+) as a cofactor. Mg(2+) serves as cofactor.

The protein resides in the cytoplasm. The catalysed reaction is Endonucleolytic cleavage to 5'-phosphomonoester.. Functionally, endonuclease that specifically degrades the RNA of RNA-DNA hybrids. This is Ribonuclease HII from Listeria innocua serovar 6a (strain ATCC BAA-680 / CLIP 11262).